The chain runs to 228 residues: MTQQDIKLIAFDLDGTLLDSVPDLAVAADQAVQALGYPAVSEEQVRDYVGNGADVLIGRALSQSMTISSDLSEDLRAKGRELFDDFYAQSGHQLSHLYPTVKETLEELHQAGFTMALVTNKPSKFVPEILEQHGIAKYFVDVLGGDAFPEKKPNPVALNWLMEKHQVKASEMLMVGDSKNDILAAKNAGCASFGLTYGYNHGEPISASNPDFVADSLSELLEVVAVSA.

Asp-12 acts as the Nucleophile in catalysis. Mg(2+) is bound by residues Asp-12, Asp-14, and Asp-177.

It belongs to the HAD-like hydrolase superfamily. CbbY/CbbZ/Gph/YieH family. The cofactor is Mg(2+).

It carries out the reaction 2-phosphoglycolate + H2O = glycolate + phosphate. It participates in organic acid metabolism; glycolate biosynthesis; glycolate from 2-phosphoglycolate: step 1/1. In terms of biological role, specifically catalyzes the dephosphorylation of 2-phosphoglycolate. Is involved in the dissimilation of the intracellular 2-phosphoglycolate formed during the DNA repair of 3'-phosphoglycolate ends, a major class of DNA lesions induced by oxidative stress. The polypeptide is Phosphoglycolate phosphatase (Vibrio parahaemolyticus serotype O3:K6 (strain RIMD 2210633)).